A 225-amino-acid polypeptide reads, in one-letter code: Orotate phosphoribosyltransferase (225 aa).

5-phospho-alpha-D-ribose 1-diphosphate is bound at residue Lys29. Residue 37–38 participates in orotate binding; the sequence is FF. 5-phospho-alpha-D-ribose 1-diphosphate contacts are provided by residues 75 to 76, Arg101, Lys102, Lys105, His107, and 126 to 134; these read YK and DDVISAGTS. Orotate is bound by residues Ser130 and Arg158.

The protein belongs to the purine/pyrimidine phosphoribosyltransferase family. PyrE subfamily. Homodimer. Mg(2+) is required as a cofactor.

The enzyme catalyses orotidine 5'-phosphate + diphosphate = orotate + 5-phospho-alpha-D-ribose 1-diphosphate. It functions in the pathway pyrimidine metabolism; UMP biosynthesis via de novo pathway; UMP from orotate: step 1/2. Its function is as follows. Catalyzes the transfer of a ribosyl phosphate group from 5-phosphoribose 1-diphosphate to orotate, leading to the formation of orotidine monophosphate (OMP). This Ralstonia pickettii (strain 12J) protein is Orotate phosphoribosyltransferase.